The following is an 832-amino-acid chain: WD repeat-containing protein 75 (832 aa).

13 WD repeats span residues 4-43, 47-86, 90-131, 145-184, 193-230, 236-275, 278-317, 323-361, 375-424, 431-477, 490-528, 532-572, and 577-614; these read QCQI…KVYS, EECI…KLWD, GILI…QLVS, KEIS…YYFK, LKAT…RLWR, KEYT…VQWP, SEEK…SIID, SGII…QFYS, QQEF…KLWE, SFVL…KVWM, SWLC…TVWE, WDLK…CCWN, and ALEW…FLFQ. Residues 764 to 798 are disordered; it reads SQSTEESKEDEEMKSEHSEADSSDETEEMESQKRF.

As to quaternary structure, component of the proposed t-UTP subcomplex of the ribosomal small subunit (SSU) processome. SSU processome is composed of more than 70 proteins and the RNA chaperone small nucleolar RNA (snoRNA) U3.

Its subcellular location is the nucleus. The protein resides in the nucleolus. Its function is as follows. Ribosome biogenesis factor. Part of the small subunit (SSU) processome, first precursor of the small eukaryotic ribosomal subunit. During the assembly of the SSU processome in the nucleolus, many ribosome biogenesis factors, an RNA chaperone and ribosomal proteins associate with the nascent pre-rRNA and work in concert to generate RNA folding, modifications, rearrangements and cleavage as well as targeted degradation of pre-ribosomal RNA by the RNA exosome. Involved in nucleolar processing of pre-18S ribosomal RNA. Required for optimal pre-ribosomal RNA transcription by RNA polymerase I. In Xenopus laevis (African clawed frog), this protein is WD repeat-containing protein 75 (wdr75).